We begin with the raw amino-acid sequence, 129 residues long: Small ribosomal subunit protein bS6 (129 aa).

Positions 103-129 (LKQKEERAERAPRREERAEAKPEAAAE) are disordered. Residues 104-129 (KQKEERAERAPRREERAEAKPEAAAE) are compositionally biased toward basic and acidic residues.

This sequence belongs to the bacterial ribosomal protein bS6 family.

In terms of biological role, binds together with bS18 to 16S ribosomal RNA. The protein is Small ribosomal subunit protein bS6 of Vibrio campbellii (strain ATCC BAA-1116).